The chain runs to 270 residues: Glutamate racemase (270 aa).

Residues 10–11 and 42–43 each bind substrate; these read DS and YG. Catalysis depends on Cys74, which acts as the Proton donor/acceptor. 75-76 serves as a coordination point for substrate; that stretch reads NT. Cys189 (proton donor/acceptor) is an active-site residue. 190-191 is a binding site for substrate; the sequence is TH.

Belongs to the aspartate/glutamate racemases family.

The catalysed reaction is L-glutamate = D-glutamate. It functions in the pathway cell wall biogenesis; peptidoglycan biosynthesis. In terms of biological role, provides the (R)-glutamate required for cell wall biosynthesis. The polypeptide is Glutamate racemase (Bartonella quintana (strain Toulouse) (Rochalimaea quintana)).